The chain runs to 331 residues: MELHILEHRVRVLSLARPGLWLYTHPLIKLLFLPSRSRCKFFSLTETPEDYTLMVDEEGFKELPPSEFLQVAEATWLVMNVSHSGSVVQAAGVTKIARSVIAPLAEHHVSVLMLSTYQTDFILVREQDLSVVIHTLAREFQIYREVGGEPVPVTGDDSSNGFPQAQHGPSPTVHPIQSPQNRFCVLTLDPETLPAVATTLIDVLFYSHSVPKEAASGGPESTSIPFFAFSLIEGYISIVMDAETQKKFPSDLLLTSSSGELWRMVRIGGQPLGFDECGIVAQIAGPLAAVDVSAYYISTFNFDHALVPEDEISCVIDILQRRQEGLASKDP.

The residue at position 14 (serine 14) is a Phosphoserine. The region spanning 72–139 (AEATWLVMNV…SVVIHTLARE (68 aa)) is the ACT 1 domain. 110-111 (SV) is a binding site for L-arginine. Residues 155–174 (GDDSSNGFPQAQHGPSPTVH) are disordered. Polar residues predominate over residues 156–174 (DDSSNGFPQAQHGPSPTVH). An ACT 2 domain is found at 262–322 (WRMVRIGGQP…SCVIDILQRR (61 aa)). Residues glycine 273, 279-280 (IV), and 299-303 (TFNFD) contribute to the L-arginine site.

This sequence belongs to the GATS family. In terms of assembly, forms homodimers and heterodimers with CASTOR2. Interacts with the GATOR2 complex which is composed of MIOS, SEC13, SEH1L, WDR24 and WDR59; the interaction is negatively regulated by arginine. Interacts with TM4SF5; the interaction is positively regulated by leucine and is negatively regulated by arginine. In terms of processing, phosphorylation at Ser-14 by AKT1, promoting the interaction between CASTOR1 and RNF167. Post-translationally, ubiquitinated by RNF167 via 'Lys-29'-polyubiquitination, leading to its degradation, releasing the GATOR2 complex. Ubiquitination by RNF167 is promoted by phosphorylation at Ser-14 by AKT1.

It localises to the cytoplasm. The protein resides in the cytosol. Functions as an intracellular arginine sensor within the amino acid-sensing branch of the TORC1 signaling pathway. As a homodimer or a heterodimer with CASTOR2, binds and inhibits the GATOR subcomplex GATOR2 and thereby mTORC1. Binding of arginine to CASTOR1 allosterically disrupts the interaction of CASTOR1-containing dimers with GATOR2 which can in turn activate mTORC1 and the TORC1 signaling pathway. The polypeptide is Cytosolic arginine sensor for mTORC1 subunit 1 (Rattus norvegicus (Rat)).